The primary structure comprises 225 residues: uncharacterized protein (225 aa).

Residues 1–19 (MKFNSISPNKQHHTGFTTS) are compositionally biased toward polar residues. The interval 1-21 (MKFNSISPNKQHHTGFTTSNN) is disordered.

This is an uncharacterized protein from Dictyostelium discoideum (Social amoeba).